Here is a 437-residue protein sequence, read N- to C-terminus: MVAPRISFVSLGCPKALVDSERIITSLRSEGYEISRQHQGADVVIVNTCGFLDSARKESLANIDEALKENGKVIVTGCLGADPDVIRQTYPNVLAITGPQAYESVIEAVHTAIPPIHDPFLDLVPPQGIRLTPRHYAYLKISEGCSNRCSFCIIPTLRGDLTSRPISDVLREAEKLVQAGVKELLVISQDTSAYGIDLKYLENSWKDRTIKTKFFDLCRELGDMGIWVRMHYVYPYPHVDEVIELMAAKKILPYLDIPFQHASPTVLRHMKRPALMEKTNRRIEKWRKICPDLTLRSTFIVGFPGETNEDFNMLLEWLEDAKIERAGCFKYEEVKGAVANDLGLENIPEDVKENRWHRFMAKQQQISTHLLKKKIGKRLQVLIDESQGKVAKGRSQYDAPEIDGVVHISSRRPLRVGEFVTVKIEQSDAYDLYGIAV.

Positions Pro4 to Pro114 constitute an MTTase N-terminal domain. Residues Cys13, Cys49, Cys78, Cys145, Cys149, and Cys152 each coordinate [4Fe-4S] cluster. Residues Leu131–His369 enclose the Radical SAM core domain. Positions Lys372–Val437 constitute a TRAM domain.

Belongs to the methylthiotransferase family. RimO subfamily. Requires [4Fe-4S] cluster as cofactor.

Its subcellular location is the cytoplasm. It carries out the reaction L-aspartate(89)-[ribosomal protein uS12]-hydrogen + (sulfur carrier)-SH + AH2 + 2 S-adenosyl-L-methionine = 3-methylsulfanyl-L-aspartate(89)-[ribosomal protein uS12]-hydrogen + (sulfur carrier)-H + 5'-deoxyadenosine + L-methionine + A + S-adenosyl-L-homocysteine + 2 H(+). Catalyzes the methylthiolation of an aspartic acid residue of ribosomal protein uS12. The protein is Ribosomal protein uS12 methylthiotransferase RimO of Bartonella tribocorum (strain CIP 105476 / IBS 506).